The primary structure comprises 230 residues: Ion-translocating oxidoreductase complex subunit E (230 aa).

6 consecutive transmembrane segments (helical) span residues 18 to 38 (ALVQLLGLCPLLAVTSTATNA), 39 to 59 (LGLGLATTLVLTLTNLTVSAL), 63 to 83 (TPAEIRIPIYVMIIASVVSAV), 86 to 106 (LINAYAFGLYQSLGIFIPLIV), 125 to 145 (WLSALDGFSIGMGATGAMFVL), and 182 to 202 (PFLLAMLPPGAFIGLGLMLAV).

This sequence belongs to the NqrDE/RnfAE family. The complex is composed of six subunits: RsxA, RsxB, RsxC, RsxD, RsxE and RsxG.

It is found in the cell inner membrane. Part of a membrane-bound complex that couples electron transfer with translocation of ions across the membrane. Required to maintain the reduced state of SoxR. In Salmonella newport (strain SL254), this protein is Ion-translocating oxidoreductase complex subunit E.